The primary structure comprises 394 residues: Elongation factor Tu (394 aa).

The tr-type G domain occupies 10–204 (KPHVNIGTIG…AVDSYIPQPV (195 aa)). The G1 stretch occupies residues 19–26 (GHVDHGKT). Position 19–26 (19–26 (GHVDHGKT)) interacts with GTP. A Mg(2+)-binding site is contributed by Thr26. The interval 60 to 64 (GITIS) is G2. The interval 81–84 (DCPG) is G3. GTP-binding positions include 81-85 (DCPGH) and 136-139 (NKVD). A G4 region spans residues 136–139 (NKVD). The tract at residues 174 to 176 (SAL) is G5.

This sequence belongs to the TRAFAC class translation factor GTPase superfamily. Classic translation factor GTPase family. EF-Tu/EF-1A subfamily. As to quaternary structure, monomer.

The protein resides in the cytoplasm. It catalyses the reaction GTP + H2O = GDP + phosphate + H(+). In terms of biological role, GTP hydrolase that promotes the GTP-dependent binding of aminoacyl-tRNA to the A-site of ribosomes during protein biosynthesis. The sequence is that of Elongation factor Tu from Rickettsia rhipicephali.